The chain runs to 440 residues: Trigger factor (440 aa).

One can recognise a PPIase FKBP-type domain in the interval 163–248 (GMVLTVDFSF…LKEIKKKELP (86 aa)).

The protein belongs to the FKBP-type PPIase family. Tig subfamily.

It is found in the cytoplasm. The catalysed reaction is [protein]-peptidylproline (omega=180) = [protein]-peptidylproline (omega=0). Functionally, involved in protein export. Acts as a chaperone by maintaining the newly synthesized protein in an open conformation. Functions as a peptidyl-prolyl cis-trans isomerase. This chain is Trigger factor, found in Trichlorobacter lovleyi (strain ATCC BAA-1151 / DSM 17278 / SZ) (Geobacter lovleyi).